Consider the following 613-residue polypeptide: MTLITPAINSSRRKTHTVRIGNLYIGSDHSIKTQSMTTTLTTDIDSTVEQIYALAEHNCDIVRVTVQGIKEAQACEKIKERLIALGLNIPLVADIHFFPQAAMLVADFADKVRINPGNYIDKRNMFKGTKIYTEASYAQSLLRLEEKFAPLVEKCKRLGKAMRIGVNHGSLSERIMQKYGDTIEGMVASAIEYIAVCEKLNYRDVVFSMKSSNPKIMVTAYRQLAKDLDARGWLYPLHLGVTEAGMGVDGIIKSAVGIGTLLAEGLGDTIRCSLTGCPTTEIPVCDSLLRHTKIYLDLPEKKNPFSLQHSENFVSAAEKPAKTTLWGDVYGVFLKLYPHHLTDFTPEELLEHLGVNPVTKEKAFTTPEGVVVPPELKDAPITDVLREHFLVFHHHQVPCLYEHNEEIWDSPAVHQAPFVHFHASDPFIHTSRDFFEKQGHQGKPTKLVFSRDFDNKEEAAISIATEFGALLLDGLGEAVVLDLPNLPLQDVLKIAFGTLQNAGVRLVKTEYISCPMCGRTLFDLEEVTTRIRKRTQHLPGLKIAIMGCIVNGPGEMADADFGFVGSKTGMIDLYVKHTCVKAHIPMEDAEEELIRLLQEHGVWKDPEETKLTV.

[4Fe-4S] cluster contacts are provided by Cys514, Cys517, Cys548, and Glu555.

Belongs to the IspG family. The cofactor is [4Fe-4S] cluster.

The enzyme catalyses (2E)-4-hydroxy-3-methylbut-2-enyl diphosphate + oxidized [flavodoxin] + H2O + 2 H(+) = 2-C-methyl-D-erythritol 2,4-cyclic diphosphate + reduced [flavodoxin]. The protein operates within isoprenoid biosynthesis; isopentenyl diphosphate biosynthesis via DXP pathway; isopentenyl diphosphate from 1-deoxy-D-xylulose 5-phosphate: step 5/6. Converts 2C-methyl-D-erythritol 2,4-cyclodiphosphate (ME-2,4cPP) into 1-hydroxy-2-methyl-2-(E)-butenyl 4-diphosphate. The chain is 4-hydroxy-3-methylbut-2-en-1-yl diphosphate synthase (flavodoxin) from Chlamydia pneumoniae (Chlamydophila pneumoniae).